The following is a 197-amino-acid chain: Holliday junction branch migration complex subunit RuvA (197 aa).

Positions 1–63 (MISSLRGEVL…EDSMTLYGFV (63 aa)) are domain I. The interval 64-139 (DGETRDLFLT…KVGPAGSAAT (76 aa)) is domain II. A flexible linker region spans residues 139–143 (TAPAV). A domain III region spans residues 144–197 (NGHTVRAPVVEALVGLGFAAKQAEEATDKVLAGDGEATTSSALRAALSLLGKAR).

It belongs to the RuvA family. As to quaternary structure, homotetramer. Forms an RuvA(8)-RuvB(12)-Holliday junction (HJ) complex. HJ DNA is sandwiched between 2 RuvA tetramers; dsDNA enters through RuvA and exits via RuvB. An RuvB hexamer assembles on each DNA strand where it exits the tetramer. Each RuvB hexamer is contacted by two RuvA subunits (via domain III) on 2 adjacent RuvB subunits; this complex drives branch migration. In the full resolvosome a probable DNA-RuvA(4)-RuvB(12)-RuvC(2) complex forms which resolves the HJ.

The protein localises to the cytoplasm. Functionally, the RuvA-RuvB-RuvC complex processes Holliday junction (HJ) DNA during genetic recombination and DNA repair, while the RuvA-RuvB complex plays an important role in the rescue of blocked DNA replication forks via replication fork reversal (RFR). RuvA specifically binds to HJ cruciform DNA, conferring on it an open structure. The RuvB hexamer acts as an ATP-dependent pump, pulling dsDNA into and through the RuvAB complex. HJ branch migration allows RuvC to scan DNA until it finds its consensus sequence, where it cleaves and resolves the cruciform DNA. The chain is Holliday junction branch migration complex subunit RuvA from Mycobacterium marinum (strain ATCC BAA-535 / M).